We begin with the raw amino-acid sequence, 93 residues long: UPF0358 protein lmo1070 (93 aa).

It belongs to the UPF0358 family.

The protein is UPF0358 protein lmo1070 of Listeria monocytogenes serovar 1/2a (strain ATCC BAA-679 / EGD-e).